We begin with the raw amino-acid sequence, 83 residues long: Probable calcium-binding protein CML28 (83 aa).

EF-hand domains are found at residues 5–40 and 43–75; these read TEKAEHDRIFKKFDANGDGKISAAELGDALKNLGSV and EDIKRMMAEIDTDGDGYISYQEFIDFASANRGL. Residues Asp18, Asn20, Asp22, Lys24, Glu29, Asp53, Asp55, Asp57, Tyr59, and Glu64 each coordinate Ca(2+).

In terms of biological role, potential calcium sensor. This chain is Probable calcium-binding protein CML28 (CML28), found in Arabidopsis thaliana (Mouse-ear cress).